The chain runs to 424 residues: Dihydroorotase-like protein (424 aa).

Belongs to the metallo-dependent hydrolases superfamily. DHOase family. PyrC' subfamily. Heterododecamer of 6 active PyrB subunits and 6 non-catalytic PyrC' subunits.

In terms of biological role, non-functional DHOase. The chain is Dihydroorotase-like protein from Pseudomonas putida (Arthrobacter siderocapsulatus).